The sequence spans 2063 residues: Rho guanine nucleotide exchange factor 17 (2063 aa).

Disordered regions lie at residues 22 to 365 (WSGG…MSDS), 380 to 466 (YLAS…SNPD), 485 to 581 (LRVR…AEED), and 602 to 958 (IQRM…RHVR). Positions 65-76 (PLAAPAQPRPLR) are enriched in low complexity. A compositionally biased stretch (basic and acidic residues) spans 87–96 (RRFDAPRLDD). Low complexity predominate over residues 108 to 122 (PAAAEEAAEGPARGA). Phosphoserine is present on residues S142 and S152. Over residues 225–250 (AGARASCSSSSIAASYPVSRSRAASS) the composition is skewed to low complexity. S310 is modified (phosphoserine). A compositionally biased stretch (polar residues) spans 313–323 (LNLSSMNSAGV). Phosphoserine is present on residues S326, S332, S383, S387, S395, S410, and S420. Positions 388 to 397 (RGSSRYSSTE) are enriched in polar residues. Basic and acidic residues predominate over residues 445 to 456 (ALRDGGFEPEKS). Phosphoserine occurs at positions 461 and 546. A compositionally biased stretch (low complexity) spans 562-573 (SALKSSSSELLL). S619 carries the post-translational modification Phosphoserine. A compositionally biased stretch (polar residues) spans 671 to 680 (LSSSSAQTNH). S696 carries the phosphoserine modification. Phosphothreonine is present on residues T699 and T702. S735 carries the phosphoserine modification. Polar residues predominate over residues 754–765 (SVDSNLLGSLSP). The span at 827-836 (SLSDPSRRGE) shows a compositional bias: basic and acidic residues. Phosphoserine is present on S914. Positions 917–928 (LIRRGSKKRPAR) are enriched in basic residues. Residues 930-939 (SHQELRRDEG) show a composition bias toward basic and acidic residues. S961 and S1002 each carry phosphoserine. The tract at residues 1034–1060 (APPSAEAKPPEAARPADEPTPASKCCS) is disordered. A compositionally biased stretch (basic and acidic residues) spans 1041–1050 (KPPEAARPAD). Residues 1066–1254 (MRKHVAMTLL…KQVAERINKG (189 aa)) enclose the DH domain. Phosphoserine is present on S1331. Disordered stretches follow at residues 1564 to 1584 (HREP…PAGP), 1616 to 1719 (GLEM…SSHG), 1991 to 2020 (TPPP…PAPA), and 2036 to 2055 (FRLS…DDST). A compositionally biased stretch (pro residues) spans 1568-1582 (PPSLRSPPETAPEPA). The span at 1644 to 1680 (SPSPSGTLQSQASRSTISSSFGNEETPSSKEATAETT) shows a compositional bias: low complexity. A compositionally biased stretch (basic and acidic residues) spans 2004 to 2013 (PSLEHRDSPW).

In terms of tissue distribution, highly expressed in the heart.

In terms of biological role, acts as a guanine nucleotide exchange factor (GEF) for RhoA GTPases. This chain is Rho guanine nucleotide exchange factor 17 (ARHGEF17), found in Homo sapiens (Human).